Here is a 224-residue protein sequence, read N- to C-terminus: Proteasome subunit beta (224 aa).

Residues 1–6 (MDVMKG) constitute a propeptide, removed in mature form; by autocatalysis. Thr7 serves as the catalytic Nucleophile.

The protein belongs to the peptidase T1B family. As to quaternary structure, the 20S proteasome core is composed of 14 alpha and 14 beta subunits that assemble into four stacked heptameric rings, resulting in a barrel-shaped structure. The two inner rings, each composed of seven catalytic beta subunits, are sandwiched by two outer rings, each composed of seven alpha subunits. The catalytic chamber with the active sites is on the inside of the barrel. Has a gated structure, the ends of the cylinder being occluded by the N-termini of the alpha-subunits. Is capped at one or both ends by the proteasome regulatory ATPase, PAN.

It is found in the cytoplasm. It catalyses the reaction Cleavage of peptide bonds with very broad specificity.. Its activity is regulated as follows. The formation of the proteasomal ATPase PAN-20S proteasome complex, via the docking of the C-termini of PAN into the intersubunit pockets in the alpha-rings, triggers opening of the gate for substrate entry. Interconversion between the open-gate and close-gate conformations leads to a dynamic regulation of the 20S proteasome proteolysis activity. Its function is as follows. Component of the proteasome core, a large protease complex with broad specificity involved in protein degradation. This Methanocaldococcus sp. (strain FS406-22) protein is Proteasome subunit beta.